A 207-amino-acid chain; its full sequence is Guanylate kinase (207 aa).

Residues 4–184 (GTLYIVSAPS…AQMDFRSIIR (181 aa)) enclose the Guanylate kinase-like domain. ATP is bound at residue 11 to 18 (APSGAGKS).

It belongs to the guanylate kinase family.

The protein localises to the cytoplasm. It carries out the reaction GMP + ATP = GDP + ADP. In terms of biological role, essential for recycling GMP and indirectly, cGMP. The protein is Guanylate kinase of Aliivibrio fischeri (strain ATCC 700601 / ES114) (Vibrio fischeri).